A 396-amino-acid chain; its full sequence is Putative carbamoyltransferase YgeW (396 aa).

Carbamoyl phosphate is bound by residues 71–74 (STRT), Gln-98, 165–168 (HPTQ), and 330–331 (CL).

It belongs to the aspartate/ornithine carbamoyltransferase superfamily. Homotrimer.

The chain is Putative carbamoyltransferase YgeW (ygeW) from Escherichia coli O6:H1 (strain CFT073 / ATCC 700928 / UPEC).